The primary structure comprises 340 residues: Glycerol-3-phosphate dehydrogenase [NAD(P)+] (340 aa).

NADPH-binding residues include serine 14, phenylalanine 15, arginine 35, and lysine 108. Lysine 108 and glycine 136 together coordinate sn-glycerol 3-phosphate. Residue alanine 140 coordinates NADPH. Sn-glycerol 3-phosphate is bound by residues lysine 191, aspartate 244, serine 254, arginine 255, and asparagine 256. The Proton acceptor role is filled by lysine 191. Arginine 255 contributes to the NADPH binding site. Glutamate 281 contributes to the NADPH binding site.

Belongs to the NAD-dependent glycerol-3-phosphate dehydrogenase family.

It localises to the cytoplasm. The enzyme catalyses sn-glycerol 3-phosphate + NAD(+) = dihydroxyacetone phosphate + NADH + H(+). It carries out the reaction sn-glycerol 3-phosphate + NADP(+) = dihydroxyacetone phosphate + NADPH + H(+). The protein operates within membrane lipid metabolism; glycerophospholipid metabolism. Functionally, catalyzes the reduction of the glycolytic intermediate dihydroxyacetone phosphate (DHAP) to sn-glycerol 3-phosphate (G3P), the key precursor for phospholipid synthesis. The polypeptide is Glycerol-3-phosphate dehydrogenase [NAD(P)+] (Pseudomonas aeruginosa (strain ATCC 15692 / DSM 22644 / CIP 104116 / JCM 14847 / LMG 12228 / 1C / PRS 101 / PAO1)).